A 311-amino-acid chain; its full sequence is MALPILLDCDPGHDDAIAIVLALASPELDVKAITSSAGNQTPEKTLRNVLRMLTLLNRTDIPVAGGAVKPLMRELIIADNVHGESGLDGPALPEPTFAPQNCTAVELMAKTLRESAEPVTIVSTGPQTNVALLLNSHPELHSKIARIVIMGGAMGLGNWTPAAEFNIYVDPEAAEIVFQSGIPVVMAGLDVTHKAQIHIEDTERFRAIGNPVSTIVAELLDFFLEYHKDEKWGFVGAPLHDPCTIAWLLKPELFTTVERWVGVETQGKYTQGMTVVDYYYLTDNKPNATVMVDVDRQGFVDLLADRLKFYA.

Histidine 240 is a catalytic residue.

This sequence belongs to the IUNH family. RihA subfamily.

Its function is as follows. Hydrolyzes cytidine or uridine to ribose and cytosine or uracil, respectively. In Shigella boydii serotype 4 (strain Sb227), this protein is Pyrimidine-specific ribonucleoside hydrolase RihA.